A 30-amino-acid polypeptide reads, in one-letter code: Propionyl-CoA carboxylase alpha chain (30 aa).

Positions 1-30 (PKIRKVLVANRGEIAIRVMRTXKELGIATV) constitute a Biotin carboxylation domain.

As to quaternary structure, dodecamer composed of six biotin-containing alpha subunits and six beta subunits. It depends on Mg(2+) as a cofactor. Mn(2+) is required as a cofactor. The cofactor is biotin.

The enzyme catalyses propanoyl-CoA + hydrogencarbonate + ATP = (S)-methylmalonyl-CoA + ADP + phosphate + H(+). It functions in the pathway metabolic intermediate metabolism; propanoyl-CoA degradation; succinyl-CoA from propanoyl-CoA: step 1/3. In terms of biological role, this is one of the 2 subunits of the biotin-dependent propionyl-CoA carboxylase (PCC), the enzyme catalyzing the carboxylation of propionyl-CoA/propanoyl-CoA to D-methylmalonyl-CoA/(S)-methylmalonyl-CoA. Within the holoenzyme, the alpha subunit catalyzes the ATP-dependent carboxylation of the biotin carried by the biotin carboxyl carrier (BCC) domain, while the beta subunit then transfers the carboxyl group from carboxylated biotin to propionyl-CoA. Propionyl-CoA carboxylase also carboxylates acetyl-CoA, butyryl-CoA and succinyl-CoA. The chain is Propionyl-CoA carboxylase alpha chain from Myxococcus xanthus.